The following is a 324-amino-acid chain: Delta-aminolevulinic acid dehydratase (324 aa).

Residues Cys-120, Cys-122, and Cys-130 each coordinate Zn(2+). The active-site Schiff-base intermediate with substrate is the Lys-195. 2 residues coordinate 5-aminolevulinate: Arg-205 and Arg-217. Residue Glu-233 participates in Mg(2+) binding. Lys-248 serves as the catalytic Schiff-base intermediate with substrate. 5-aminolevulinate contacts are provided by Ser-274 and Tyr-313.

This sequence belongs to the ALAD family. As to quaternary structure, homooctamer. It depends on Zn(2+) as a cofactor.

It catalyses the reaction 2 5-aminolevulinate = porphobilinogen + 2 H2O + H(+). It functions in the pathway porphyrin-containing compound metabolism; protoporphyrin-IX biosynthesis; coproporphyrinogen-III from 5-aminolevulinate: step 1/4. In terms of biological role, catalyzes an early step in the biosynthesis of tetrapyrroles. Binds two molecules of 5-aminolevulinate per subunit, each at a distinct site, and catalyzes their condensation to form porphobilinogen. This chain is Delta-aminolevulinic acid dehydratase (hemB), found in Bacillus subtilis (strain 168).